The chain runs to 72 residues: Defensin-like protein 230 (72 aa).

An N-terminal signal peptide occupies residues 1–27; it reads MEKKSLACLSFLLLVLFVAQEIVVSEA. 4 disulfides stabilise this stretch: C30-C72, C41-C60, C45-C66, and C49-C68.

It belongs to the DEFL family.

The protein localises to the secreted. This Pisum sativum (Garden pea) protein is Defensin-like protein 230 (PI230).